The chain runs to 586 residues: Assimilatory ferredoxin-dependent nitrite reductase (586 aa).

Cysteine 411, cysteine 417, cysteine 455, and cysteine 459 together coordinate [4Fe-4S] cluster. A siroheme-binding site is contributed by cysteine 459. The tract at residues 566–586 (SWYPFADEDEPPKTEQPMTSD) is disordered.

This sequence belongs to the nitrite and sulfite reductase 4Fe-4S domain family. Monomer. Siroheme serves as cofactor. [4Fe-4S] cluster is required as a cofactor.

It carries out the reaction 6 oxidized [2Fe-2S]-[ferredoxin] + NH4(+) + 2 H2O = nitrite + 6 reduced [2Fe-2S]-[ferredoxin] + 8 H(+). Its pathway is nitrogen metabolism; nitrate reduction (assimilation). Its activity is regulated as follows. Inhibited by cyanide and azide. Its function is as follows. Catalyzes the reduction of nitrite to ammonium in the nitrate assimilation pathway, using ferredoxin as the electron donor. Can use reduced methyl viologen but neither NADPH nor NADH as electron donors. This is Assimilatory ferredoxin-dependent nitrite reductase from Haloferax mediterranei (strain ATCC 33500 / DSM 1411 / JCM 8866 / NBRC 14739 / NCIMB 2177 / R-4) (Halobacterium mediterranei).